The primary structure comprises 32 residues: Zinc metalloproteinase carinactivase-1 catalytic subunit (32 aa).

The Peptidase M12B domain maps to 10–32; the sequence is FIKLVIVVDHSMVXKXNNDLIAI.

This sequence belongs to the venom metalloproteinase (M12B) family. P-III subfamily. P-IIId sub-subfamily. As to quaternary structure, heterodimer of a metalloproteinase subunit and a regulatory subunit comprising two disulfide-linked lectins (14 kDa and 17 kDa chains) (AC Q9PRP7 and AC Q9PRP8). Zn(2+) serves as cofactor. Expressed by the venom gland.

Its subcellular location is the secreted. Calcium-dependent prothrombin (F2) activator. This protein may activate prothrombin via recognition by the regulatory subunit of the calcium ion bound conformation of its gamma-carboxyglutamic acid (GLA) domain, and the subsequent conversion of prothrombin to active thrombin is catalyzed by the catalytic subunit. In Echis carinatus (Saw-scaled viper), this protein is Zinc metalloproteinase carinactivase-1 catalytic subunit.